Consider the following 124-residue polypeptide: Ribonuclease pancreatic A (124 aa).

Residues 1 to 24 form a disordered region; the sequence is AESSAMKFERQHVDSGGSSSSNAN. Positions 7 and 10 each coordinate substrate. Residue histidine 12 is the Proton acceptor of the active site. 4 cysteine pairs are disulfide-bonded: cysteine 26–cysteine 84, cysteine 40–cysteine 95, cysteine 58–cysteine 110, and cysteine 65–cysteine 72. Substrate is bound by residues 41–45, lysine 66, and arginine 85; that span reads KPVNT. Residue histidine 119 is the Proton donor of the active site.

This sequence belongs to the pancreatic ribonuclease family. As to expression, pancreas.

The protein resides in the secreted. The enzyme catalyses an [RNA] containing cytidine + H2O = an [RNA]-3'-cytidine-3'-phosphate + a 5'-hydroxy-ribonucleotide-3'-[RNA].. The catalysed reaction is an [RNA] containing uridine + H2O = an [RNA]-3'-uridine-3'-phosphate + a 5'-hydroxy-ribonucleotide-3'-[RNA].. This Cavia porcellus (Guinea pig) protein is Ribonuclease pancreatic A.